The sequence spans 153 residues: Nucleoside diphosphate kinase (153 aa).

Lys-13, Phe-61, Arg-89, Thr-95, Arg-106, and Asn-116 together coordinate ATP. Phosphothreonine is present on Thr-95. Residue His-119 is the Pros-phosphohistidine intermediate of the active site.

The protein belongs to the NDK family. Homohexamer and homotetramer. Interacts with TOM40 preferentially in an unfolded, unphosphorylated form. It depends on Mg(2+) as a cofactor. In terms of processing, the N-terminus is blocked.

Its subcellular location is the cytoplasm. It localises to the mitochondrion intermembrane space. It carries out the reaction a 2'-deoxyribonucleoside 5'-diphosphate + ATP = a 2'-deoxyribonucleoside 5'-triphosphate + ADP. It catalyses the reaction a ribonucleoside 5'-diphosphate + ATP = a ribonucleoside 5'-triphosphate + ADP. Its function is as follows. Major role in the synthesis of nucleoside triphosphates other than ATP. The ATP gamma phosphate is transferred to the NDP beta phosphate via a ping-pong mechanism, using a phosphorylated active-site intermediate. Required for repair of UV radiation- and etoposide-induced DNA damage. The sequence is that of Nucleoside diphosphate kinase (YNK1) from Saccharomyces cerevisiae (strain ATCC 204508 / S288c) (Baker's yeast).